The following is a 498-amino-acid chain: O-methyltransferase OME1 (498 aa).

Residues 1–19 (MSTMALHRTASTKSDTTMA) are compositionally biased toward polar residues. Disordered regions lie at residues 1-23 (MSTM…CPNG) and 42-83 (HRAE…QPEY). The segment covering 50–65 (SSTSSVSTTPTSPSFS) has biased composition (low complexity). An S-adenosyl-L-methionine-binding site is contributed by aspartate 358. Catalysis depends on histidine 406, which acts as the Proton acceptor.

This sequence belongs to the class I-like SAM-binding methyltransferase superfamily. Cation-independent O-methyltransferase family.

It functions in the pathway secondary metabolite biosynthesis. O-methyltransferase; part of the gene cluster that mediates the biosynthesis of a tyrosine-derived cytochalasan acting as a fungal signal recognized by resistant rice plants and leads to avirulence in Pi33 resistant rice cultivars. The first step in the pathway is catalyzed by the hybrid PKS-NRPS ACE1, assisted by the enoyl reductase RAP1, that are responsible for fusion of the tyrosine precursor and the polyketide backbone. The polyketide synthase module (PKS) of ACE1 is responsible for the synthesis of the polyketide backbone and the downstream nonribosomal peptide synthetase (NRPS) amidates the carboxyl end of the polyketide with the tyrosine precursor. Because ACE1 lacks a designated enoylreductase (ER) domain, the required activity is provided the enoyl reductase RAP1. Reduction by the hydrolyase ORFZ, followed by dehydration and intra-molecular Diels-Alder cyclization by the Diels-Alderase ORF3 then yield the required isoindolone-fused macrocycle. A number of oxidative steps catalyzed by the tailoring enzymes identified within the cluster, including cytochrome P450 monooxygenases CYP1 to CYP4, the FAD-linked oxidoreductase OXR2 and the short-chain dehydrogenase/reductase OXR1, are further required to afford the final cytochalasans that confer avirulence and which have still to be identified. The monooxygenase CYP1 has been shown to be a site-selective C-18 hydroxylase whereas the function of CYP3 is the site-selective epoxidation of the C-6/C-7 olefin that is present in some intermediate compounds. Finally, SYN2 and RAP2 are not required for avirulence in Pi33 resistant rice cultivars. This is O-methyltransferase OME1 from Pyricularia oryzae (strain 70-15 / ATCC MYA-4617 / FGSC 8958) (Rice blast fungus).